The following is a 278-amino-acid chain: MESFGARLHRAVAERGPLCVGIDPHPGLLARWGLDDDVHGLERFADTVVEALGDRVAVVKPQSAFFERFGSRGVAVLESTIRQLRLAGSLVLLDVKRGDIGSTVAAYASAYLEPSSPLHVDAVTVSPYLGVGALAPMFDMAAAKGGGVFVLALTSNPEGAAVQRARTAGGRTVAQVVIDEISQLNAGAQPLGSVGLVVGATIGETGHDLAAVNGPLLAPGLGAQGASAADLRVVFGSALPAVLPAYSREVLAAGPDVAALRAAADRVLADCRAALTGS.

Residue K96 is the Proton donor of the active site.

This sequence belongs to the OMP decarboxylase family. Type 2 subfamily.

The catalysed reaction is orotidine 5'-phosphate + H(+) = UMP + CO2. It participates in pyrimidine metabolism; UMP biosynthesis via de novo pathway; UMP from orotate: step 2/2. The protein is Orotidine 5'-phosphate decarboxylase of Salinispora arenicola (strain CNS-205).